A 445-amino-acid chain; its full sequence is Methionine aminopeptidase 2-1 (445 aa).

Residues 1 to 86 (MAAQASEDLQ…VQSEPPRVPL (86 aa)) form a disordered region. The segment covering 34-46 (GEAEDDSDDDADE) has biased composition (acidic residues). Basic residues predominate over residues 59 to 74 (AKKKKKRKSKKKKKGG). Position 198 (histidine 198) interacts with substrate. A divalent metal cation-binding residues include aspartate 218, aspartate 229, and histidine 298. A substrate-binding site is contributed by histidine 306. A divalent metal cation contacts are provided by glutamate 331 and glutamate 426.

Belongs to the peptidase M24A family. Methionine aminopeptidase eukaryotic type 2 subfamily. Requires Co(2+) as cofactor. The cofactor is Zn(2+). Mn(2+) serves as cofactor. Fe(2+) is required as a cofactor.

Its subcellular location is the cytoplasm. The catalysed reaction is Release of N-terminal amino acids, preferentially methionine, from peptides and arylamides.. Functionally, cotranslationally removes the N-terminal methionine from nascent proteins. The N-terminal methionine is often cleaved when the second residue in the primary sequence is small and uncharged (Met-Ala-, Cys, Gly, Pro, Ser, Thr, or Val). The polypeptide is Methionine aminopeptidase 2-1 (Aspergillus flavus (strain ATCC 200026 / FGSC A1120 / IAM 13836 / NRRL 3357 / JCM 12722 / SRRC 167)).